A 79-amino-acid chain; its full sequence is Acyl carrier protein (79 aa).

The 76-residue stretch at 2 to 77 (SDIEARVKKI…LAIDYAKNNV (76 aa)) folds into the Carrier domain. The residue at position 37 (serine 37) is an O-(pantetheine 4'-phosphoryl)serine.

This sequence belongs to the acyl carrier protein (ACP) family. In terms of processing, 4'-phosphopantetheine is transferred from CoA to a specific serine of apo-ACP by AcpS. This modification is essential for activity because fatty acids are bound in thioester linkage to the sulfhydryl of the prosthetic group.

The protein resides in the cytoplasm. It functions in the pathway lipid metabolism; fatty acid biosynthesis. Carrier of the growing fatty acid chain in fatty acid biosynthesis. This chain is Acyl carrier protein, found in Leptothrix cholodnii (strain ATCC 51168 / LMG 8142 / SP-6) (Leptothrix discophora (strain SP-6)).